Reading from the N-terminus, the 106-residue chain is Large ribosomal subunit protein uL24 (106 aa).

The protein belongs to the universal ribosomal protein uL24 family. Part of the 50S ribosomal subunit.

Functionally, one of two assembly initiator proteins, it binds directly to the 5'-end of the 23S rRNA, where it nucleates assembly of the 50S subunit. In terms of biological role, one of the proteins that surrounds the polypeptide exit tunnel on the outside of the subunit. This is Large ribosomal subunit protein uL24 from Clostridium tetani (strain Massachusetts / E88).